The primary structure comprises 36 residues: Peroxiredoxin-4 (36 aa).

Belongs to the peroxiredoxin family. AhpC/Prx1 subfamily. Homodimer; disulfide-linked, upon oxidation. Venom gland.

Its subcellular location is the secreted. It carries out the reaction a hydroperoxide + [thioredoxin]-dithiol = an alcohol + [thioredoxin]-disulfide + H2O. Functionally, venom peroxiredoxin enzyme that may play a role as part of a redox pathway leading to the structural/functional diversification of toxins through a disulfide bond engineering mechanism. The chain is Peroxiredoxin-4 from Crotalus atrox (Western diamondback rattlesnake).